The chain runs to 237 residues: Lectin ConGF (237 aa).

Residues E8 and D10 each contribute to the Mn(2+) site. 4 residues coordinate Ca(2+): D10, Y12, N14, and D19. Position 14 (N14) interacts with a carbohydrate. Mn(2+) contacts are provided by D19 and H24. Positions 99, 100, 208, and 228 each coordinate a carbohydrate.

Belongs to the leguminous lectin family. As to quaternary structure, homotetramer; dimer of dimers. In terms of processing, concanavalin A-like lectins of the Diocleinae subtribe undergo proteolytic processing referred to as circular permutation. The propeptide is split into an N-terminal and a C-terminal part, the gamma and beta chain, respectively. These are then religated in beta-gamma order to form the mature alpha chain. The beta and gamma chains can often be detected in cell extracts. Residues 1-118 of the mature chain, as displayed here, probably constitute the beta chain in the propeptide, residues 119-237 the gamma chain.

Lectin. Induces paw edema in mice. Has a weak vasorelaxant effect on rat aorta. Has anti-inflammatory and anti-nociceptive effects. The polypeptide is Lectin ConGF (Canavalia grandiflora (Jackbean)).